Here is a 792-residue protein sequence, read N- to C-terminus: Pentatricopeptide repeat-containing protein At4g30700 (792 aa).

PPR repeat units lie at residues 51-81 (DISL…VQRP), 82-117 (DVFL…DLKP), 118-152 (NSST…GCDS), 153-183 (ELLL…MPEK), 184-218 (DTIL…SCTR), 220-254 (DTTT…GCYS), 255-285 (HDYV…FRKP), 286-320 (DIVA…GARL), 321-352 (RSST…NFLS), 353-383 (HASV…SPEK), 384-418 (SLPS…EFSP), 419-453 (NPVT…DFES), 454-484 (SIYV…MTKK), 485-519 (NEVT…GITP), 520-555 (TPVT…GFEP), and 556-586 (SVKH…MSIE). Residues 591 to 666 (VWETLLGACR…APGYTLIEIG (76 aa)) are type E motif. Positions 667 to 697 (ETPHVFTSGDQSHPQVKEIYEKLEKLEGKMR) are type E(+) motif. Residues 698 to 792 (EAGYQPETEL…DGVCSCGDYW (95 aa)) form a type DYW motif region.

The protein belongs to the PPR family. PCMP-H subfamily.

The chain is Pentatricopeptide repeat-containing protein At4g30700 (DYW9) from Arabidopsis thaliana (Mouse-ear cress).